The sequence spans 35 residues: Coenzyme PQQ synthesis protein A (35 aa).

Residues 16 to 20 (EINMY) constitute a cross-link (pyrroloquinoline quinone (Glu-Tyr)).

This sequence belongs to the PqqA family.

Its pathway is cofactor biosynthesis; pyrroloquinoline quinone biosynthesis. Its function is as follows. Required for coenzyme pyrroloquinoline quinone (PQQ) biosynthesis. PQQ is probably formed by cross-linking a specific glutamate to a specific tyrosine residue and excising these residues from the peptide. The sequence is that of Coenzyme PQQ synthesis protein A from Roseobacter denitrificans (strain ATCC 33942 / OCh 114) (Erythrobacter sp. (strain OCh 114)).